The chain runs to 395 residues: ATP phosphoribosyltransferase regulatory subunit (395 aa).

It belongs to the class-II aminoacyl-tRNA synthetase family. HisZ subfamily. Heteromultimer composed of HisG and HisZ subunits.

The protein resides in the cytoplasm. It functions in the pathway amino-acid biosynthesis; L-histidine biosynthesis; L-histidine from 5-phospho-alpha-D-ribose 1-diphosphate: step 1/9. In terms of biological role, required for the first step of histidine biosynthesis. May allow the feedback regulation of ATP phosphoribosyltransferase activity by histidine. This Pseudomonas entomophila (strain L48) protein is ATP phosphoribosyltransferase regulatory subunit.